Consider the following 194-residue polypeptide: Threonylcarbamoyl-AMP synthase (194 aa).

In terms of domain architecture, YrdC-like spans 12 to 194; it reads SPNMKDLLIQ…DVMTGKLIRE (183 aa).

The protein belongs to the SUA5 family. TsaC subfamily.

The protein localises to the cytoplasm. The enzyme catalyses L-threonine + hydrogencarbonate + ATP = L-threonylcarbamoyladenylate + diphosphate + H2O. Required for the formation of a threonylcarbamoyl group on adenosine at position 37 (t(6)A37) in tRNAs that read codons beginning with adenine. Catalyzes the conversion of L-threonine, HCO(3)(-)/CO(2) and ATP to give threonylcarbamoyl-AMP (TC-AMP) as the acyladenylate intermediate, with the release of diphosphate. The chain is Threonylcarbamoyl-AMP synthase from Blochmanniella pennsylvanica (strain BPEN).